We begin with the raw amino-acid sequence, 39 residues long: Photosystem II reaction center protein J (39 aa).

Residues Leu9–Tyr29 traverse the membrane as a helical segment.

The protein belongs to the PsbJ family. As to quaternary structure, PSII is composed of 1 copy each of membrane proteins PsbA, PsbB, PsbC, PsbD, PsbE, PsbF, PsbH, PsbI, PsbJ, PsbK, PsbL, PsbM, PsbT, PsbX, PsbY, PsbZ, Psb30/Ycf12, at least 3 peripheral proteins of the oxygen-evolving complex and a large number of cofactors. It forms dimeric complexes.

It localises to the plastid. It is found in the chloroplast thylakoid membrane. Its function is as follows. One of the components of the core complex of photosystem II (PSII). PSII is a light-driven water:plastoquinone oxidoreductase that uses light energy to abstract electrons from H(2)O, generating O(2) and a proton gradient subsequently used for ATP formation. It consists of a core antenna complex that captures photons, and an electron transfer chain that converts photonic excitation into a charge separation. This Porphyra purpurea (Red seaweed) protein is Photosystem II reaction center protein J.